Consider the following 89-residue polypeptide: Conotoxin Bu5 (89 aa).

Residues 1–22 (MKLTCVLIVAVLFLTACQLATA) form the signal peptide. Positions 23-49 (ENSREEQGYSAVRSSDQIQDSDLKLTK) are excised as a propeptide. 3 cysteine pairs are disulfide-bonded: Cys51–Cys66, Cys58–Cys70, and Cys65–Cys79. Cys79 is modified (cysteine amide). Positions 80–89 (GVSIDYYDSR) are excised as a propeptide.

It belongs to the conotoxin O1 superfamily. In terms of tissue distribution, expressed by the venom duct.

The protein resides in the secreted. This is Conotoxin Bu5 from Conus bullatus (Bubble cone).